Here is a 96-residue protein sequence, read N- to C-terminus: MKTAYDVILAPVLSEKAYAGFAEGKYTFWVHPKATKTEIKNAVETAFKVKVVKVNTLHVRGKKKRLGRYLGKRPDRKKAIVQVAPGQKIEALEGLI.

The protein belongs to the universal ribosomal protein uL23 family. In terms of assembly, part of the 50S ribosomal subunit. Contacts protein L29, and trigger factor when it is bound to the ribosome.

In terms of biological role, one of the early assembly proteins it binds 23S rRNA. One of the proteins that surrounds the polypeptide exit tunnel on the outside of the ribosome. Forms the main docking site for trigger factor binding to the ribosome. The polypeptide is Large ribosomal subunit protein uL23 (Thermus thermophilus (strain ATCC BAA-163 / DSM 7039 / HB27)).